Consider the following 471-residue polypeptide: MGKTLYEKVYDAHVAVAAEGETPILYIDRHLVHEVTSPQAFDGLREKGRKVRQVSKTFATMDHNVSTTTKDINASGEMARIQMETLSKNCEEFGVTLYDLNHKYQGIVHVMGPELGITLPGMTIVCGDSHTATHGAFGSLAFGIGTSEVEHVLATQTLKQARAKTMKIEVKGKVAPGITAKDIVLAIIGKTTAAGGTGYVVEFCGEAITDLSMEGRMTVCNMAIELGAKAGLIAPDETTFEYIKGRKFSPQGADFDAAVEYWKTLKTDADAEFDAVVTLNAADIKPQVTWGTNPGQVIAVDQPIPAPESFTDPIEKASAEKALAYMGLEAGKSLSDYQVNKVFVGSCTNSRIEDMRAAAVVAKGRKVASHVQALIVPGSEQVKAQAEAEGLDVIFKEAGFEWRLPGCSMCLAMNNDRLGPHERCASTSNRNFEGRQGRDGRTHLVSPAMAAAAAIAGHFVDIRELTFDKQD.

3 residues coordinate [4Fe-4S] cluster: C347, C407, and C410.

It belongs to the aconitase/IPM isomerase family. LeuC type 1 subfamily. Heterodimer of LeuC and LeuD. [4Fe-4S] cluster serves as cofactor.

It catalyses the reaction (2R,3S)-3-isopropylmalate = (2S)-2-isopropylmalate. It participates in amino-acid biosynthesis; L-leucine biosynthesis; L-leucine from 3-methyl-2-oxobutanoate: step 2/4. Catalyzes the isomerization between 2-isopropylmalate and 3-isopropylmalate, via the formation of 2-isopropylmaleate. This Vibrio parahaemolyticus serotype O3:K6 (strain RIMD 2210633) protein is 3-isopropylmalate dehydratase large subunit.